A 178-amino-acid polypeptide reads, in one-letter code: Oligoribonuclease (178 aa).

In terms of domain architecture, Exonuclease spans 7-168; the sequence is LIWIDLEMTG…DDIRESIAEL (162 aa). The active site involves Tyr128.

This sequence belongs to the oligoribonuclease family.

It localises to the cytoplasm. In terms of biological role, 3'-to-5' exoribonuclease specific for small oligoribonucleotides. This is Oligoribonuclease from Francisella tularensis subsp. tularensis (strain FSC 198).